The chain runs to 387 residues: Succinate--CoA ligase [ADP-forming] subunit beta (387 aa).

One can recognise an ATP-grasp domain in the interval 9 to 245; it reads KDLLESYGLK…KSQENAKELK (237 aa). Residues Lys46, 53-55, Glu100, Tyr103, and Glu108 contribute to the ATP site; that span reads GRG. Residues Asn200 and Asp214 each contribute to the Mg(2+) site. Residues Asn265 and 322-324 contribute to the substrate site; that span reads GIV.

This sequence belongs to the succinate/malate CoA ligase beta subunit family. In terms of assembly, heterotetramer of two alpha and two beta subunits. Mg(2+) is required as a cofactor.

The catalysed reaction is succinate + ATP + CoA = succinyl-CoA + ADP + phosphate. It catalyses the reaction GTP + succinate + CoA = succinyl-CoA + GDP + phosphate. It participates in carbohydrate metabolism; tricarboxylic acid cycle; succinate from succinyl-CoA (ligase route): step 1/1. Succinyl-CoA synthetase functions in the citric acid cycle (TCA), coupling the hydrolysis of succinyl-CoA to the synthesis of either ATP or GTP and thus represents the only step of substrate-level phosphorylation in the TCA. The beta subunit provides nucleotide specificity of the enzyme and binds the substrate succinate, while the binding sites for coenzyme A and phosphate are found in the alpha subunit. This is Succinate--CoA ligase [ADP-forming] subunit beta from Francisella tularensis subsp. novicida (strain U112).